Consider the following 388-residue polypeptide: Tryptophan synthase beta chain 1 (388 aa).

Lys-82 is modified (N6-(pyridoxal phosphate)lysine).

Belongs to the TrpB family. Tetramer of two alpha and two beta chains. Pyridoxal 5'-phosphate is required as a cofactor.

The catalysed reaction is (1S,2R)-1-C-(indol-3-yl)glycerol 3-phosphate + L-serine = D-glyceraldehyde 3-phosphate + L-tryptophan + H2O. It functions in the pathway amino-acid biosynthesis; L-tryptophan biosynthesis; L-tryptophan from chorismate: step 5/5. Its function is as follows. The beta subunit is responsible for the synthesis of L-tryptophan from indole and L-serine. In Pyrococcus abyssi (strain GE5 / Orsay), this protein is Tryptophan synthase beta chain 1 (trpB1).